Reading from the N-terminus, the 63-residue chain is Large ribosomal subunit protein uL29 (63 aa).

Belongs to the universal ribosomal protein uL29 family.

This Christiangramia forsetii (strain DSM 17595 / CGMCC 1.15422 / KT0803) (Gramella forsetii) protein is Large ribosomal subunit protein uL29.